A 360-amino-acid chain; its full sequence is Uptake hydrogenase small subunit (360 aa).

The segment at residues 1–43 is a signal peptide (tat-type signal); that stretch reads MVETFYEVMRRQGISRRSFLKYCSLTATSLGLGPSFLPQIAHA. 8 residues coordinate [4Fe-4S] cluster: Cys60, Cys63, Cys158, Cys192, His230, Cys233, Cys258, and Cys264. [3Fe-4S] cluster contacts are provided by Cys273, Cys292, and Cys295.

The protein belongs to the [NiFe]/[NiFeSe] hydrogenase small subunit family. In terms of assembly, heterodimer of a large and a small subunit. [4Fe-4S] cluster serves as cofactor. The cofactor is [3Fe-4S] cluster. Predicted to be exported by the Tat system. The position of the signal peptide cleavage has been experimentally proven.

It localises to the cell membrane. It carries out the reaction H2 + A = AH2. Its function is as follows. This enzyme recycles the H(2) produced by nitrogenase to increase the production of ATP and to protect nitrogenase against inhibition or damage by O(2) under carbon- or phosphate-limited conditions. The protein is Uptake hydrogenase small subunit (hoxK) of Cupriavidus necator (strain ATCC 17699 / DSM 428 / KCTC 22496 / NCIMB 10442 / H16 / Stanier 337) (Ralstonia eutropha).